Consider the following 621-residue polypeptide: MNLQRRKFVRLDSTGVDGKLKSVRGRLKKVYGKMKTLENWRKTVLLACVVALAIDPLFLFIPLIDSQRFCFTFDKTLVAVVCVIRTFIDTFYVIHIIYYLITETIAPRSQASLRGEIVVHSKATLKTRLLFHFIVDIISVLPIPQVVVLTLIPLSASLVSERILKWIILSQYVPRIIRMYPLYKEVTRAFGTVAESKRVGAALNFFLYMLHSYVCGAFWYLSSIERKSTCWRAACARTSDCNLTVTDLLCKRAGSDNIRFLNTSCPLIDPAQITNSTDFDFGMYIDALKSGVLEVKPKDFPRKFVYCFWWGLRNISALGQNLETSNSAGEIFFAIIICVSGLLLFAVLIGNVQKYLQSSTTRVDEMEEKKRDTEKWMSYREIPEYLKERIRRFEDYKWRRTKGTEEEALLRSLPKDLRLETKRYLFLKLLKKVPLLQAMDDQLLDALCARLKTVHYTEKSYIVREGEPVEDMLFIMRGNLISTTTYGGRTGFFNSVDLIAGDSCGDLLTWALYSLSSQFPISSRTVQALTEVEGFVISADDLKFVATQYRRLHSKQLQHMFRFYSLQWQTWAACFIQAAWKRHCRRKLSKALREEEGKLHNTLQNDDSGGNKLNLGAAIYA.

Topologically, residues 1–43 (MNLQRRKFVRLDSTGVDGKLKSVRGRLKKVYGKMKTLENWRKT) are cytoplasmic. A helical membrane pass occupies residues 44–64 (VLLACVVALAIDPLFLFIPLI). Residues 65 to 76 (DSQRFCFTFDKT) are Extracellular-facing. Residues 77–97 (LVAVVCVIRTFIDTFYVIHII) form a helical membrane-spanning segment. At 98–128 (YYLITETIAPRSQASLRGEIVVHSKATLKTR) the chain is on the cytoplasmic side. Residues 129–149 (LLFHFIVDIISVLPIPQVVVL) traverse the membrane as a helical segment. Residues 150-162 (TLIPLSASLVSER) lie on the Extracellular side of the membrane. Residues 163–183 (ILKWIILSQYVPRIIRMYPLY) traverse the membrane as a helical segment. At 184 to 198 (KEVTRAFGTVAESKR) the chain is on the cytoplasmic side. The helical transmembrane segment at 199-219 (VGAALNFFLYMLHSYVCGAFW) threads the bilayer. The Extracellular portion of the chain corresponds to 220–329 (YLSSIERKST…QNLETSNSAG (110 aa)). The helical transmembrane segment at 330-350 (EIFFAIIICVSGLLLFAVLIG) threads the bilayer. The Cytoplasmic portion of the chain corresponds to 351–621 (NVQKYLQSST…KLNLGAAIYA (271 aa)). A nucleoside 3',5'-cyclic phosphate contacts are provided by residues 435–556 (LLQA…HSKQ) and Asp506. A calmodulin-binding region spans residues 549 to 564 (YRRLHSKQLQHMFRFY). The IQ domain occupies 569–598 (QTWAACFIQAAWKRHCRRKLSKALREEEGK).

Belongs to the cyclic nucleotide-gated cation channel (TC 1.A.1.5) family. As to quaternary structure, homotetramer or heterotetramer.

It localises to the cell membrane. In terms of biological role, putative cyclic nucleotide-gated ion channel. In Arabidopsis thaliana (Mouse-ear cress), this protein is Cyclic nucleotide-gated ion channel 11 (CNGC11).